The chain runs to 462 residues: Argininosuccinate lyase (462 aa).

This sequence belongs to the lyase 1 family. Argininosuccinate lyase subfamily.

Its subcellular location is the cytoplasm. The catalysed reaction is 2-(N(omega)-L-arginino)succinate = fumarate + L-arginine. The protein operates within amino-acid biosynthesis; L-arginine biosynthesis; L-arginine from L-ornithine and carbamoyl phosphate: step 3/3. This chain is Argininosuccinate lyase, found in Leuconostoc citreum (strain KM20).